A 142-amino-acid polypeptide reads, in one-letter code: Small heat shock protein IbpB (142 aa).

A sHSP domain is found at 26–137 (SGESQSFPPY…APQRIAINER (112 aa)).

It belongs to the small heat shock protein (HSP20) family. As to quaternary structure, homodimer. Forms homomultimers of about 100-150 subunits at optimal growth temperatures. Conformation changes to oligomers at high temperatures or high ionic concentrations. The decrease in size of the multimers is accompanied by an increase in chaperone activity.

Its subcellular location is the cytoplasm. Its function is as follows. Associates with aggregated proteins, together with IbpA, to stabilize and protect them from irreversible denaturation and extensive proteolysis during heat shock and oxidative stress. Aggregated proteins bound to the IbpAB complex are more efficiently refolded and reactivated by the ATP-dependent chaperone systems ClpB and DnaK/DnaJ/GrpE. Its activity is ATP-independent. This Salmonella newport (strain SL254) protein is Small heat shock protein IbpB.